The following is a 382-amino-acid chain: Sad1-interacting factor 2 (382 aa).

Ser135 carries the phosphoserine modification. A helical transmembrane segment spans residues 356–376 (EWIVVILMGLLVLIALFSIVV).

This sequence belongs to the RMD1/sif2 family. Interacts with sad1.

Its subcellular location is the nucleus membrane. Functionally, required for sporulation where it is believed to have a role in meiotic nuclear division. The polypeptide is Sad1-interacting factor 2 (sif2) (Schizosaccharomyces pombe (strain 972 / ATCC 24843) (Fission yeast)).